The primary structure comprises 117 residues: UPF0127 protein PYRAB11210 (117 aa).

The protein belongs to the UPF0127 family.

This Pyrococcus abyssi (strain GE5 / Orsay) protein is UPF0127 protein PYRAB11210.